We begin with the raw amino-acid sequence, 55 residues long: Conotoxin Cal14.14 (55 aa).

The first 20 residues, 1–20 (MFRLGVFLLTFLLLVSMATS), serve as a signal peptide directing secretion. Disulfide bonds link cysteine 34/cysteine 48 and cysteine 38/cysteine 52.

Expressed by the venom duct.

The protein resides in the secreted. Functionally, probable neurotoxin. The chain is Conotoxin Cal14.14 from Californiconus californicus (California cone).